Consider the following 1342-residue polypeptide: DNA-directed RNA polymerase subunit beta (1342 aa).

It belongs to the RNA polymerase beta chain family. As to quaternary structure, the RNAP catalytic core consists of 2 alpha, 1 beta, 1 beta' and 1 omega subunit. When a sigma factor is associated with the core the holoenzyme is formed, which can initiate transcription.

The enzyme catalyses RNA(n) + a ribonucleoside 5'-triphosphate = RNA(n+1) + diphosphate. DNA-dependent RNA polymerase catalyzes the transcription of DNA into RNA using the four ribonucleoside triphosphates as substrates. This chain is DNA-directed RNA polymerase subunit beta, found in Salmonella agona (strain SL483).